Consider the following 370-residue polypeptide: D-alanine--D-alanine ligase (370 aa).

The 207-residue stretch at 142 to 348 folds into the ATP-grasp domain; sequence KQILTHHHIQ…YTALIDQLIQ (207 aa). Position 172 to 227 (172 to 227) interacts with ATP; that stretch reads QAHVGDHLFIKPANQGSSIGIHKAENEQEYLDGLADAFKYDYKILVEESIDNPREV. Mg(2+) contacts are provided by Asp302, Glu315, and Asn317.

It belongs to the D-alanine--D-alanine ligase family. Mg(2+) serves as cofactor. It depends on Mn(2+) as a cofactor.

Its subcellular location is the cytoplasm. The enzyme catalyses 2 D-alanine + ATP = D-alanyl-D-alanine + ADP + phosphate + H(+). Its pathway is cell wall biogenesis; peptidoglycan biosynthesis. Functionally, cell wall formation. In Lactiplantibacillus plantarum (strain ATCC BAA-793 / NCIMB 8826 / WCFS1) (Lactobacillus plantarum), this protein is D-alanine--D-alanine ligase.